Here is a 273-residue protein sequence, read N- to C-terminus: Putative cysteine-rich repeat secretory protein 40 (273 aa).

The first 32 residues, 1 to 32 (MYPSCSLLQRLVWFPFLALVATQLLFIRNVSS), serve as a signal peptide directing secretion. Gnk2-homologous domains follow at residues 39–141 (YLHH…SISV) and 151–264 (YENN…LYPF).

Belongs to the cysteine-rich repeat secretory protein family.

The protein localises to the secreted. The polypeptide is Putative cysteine-rich repeat secretory protein 40 (CRRSP40) (Arabidopsis thaliana (Mouse-ear cress)).